The following is a 486-amino-acid chain: Zinc metalloproteinase-disintegrin VMP-II (486 aa).

Residues 1-20 form the signal peptide; it reads MIQVLLVTICLAVFPYQGSS. The propeptide occupies 21-190; that stretch reads IILESGNVND…KASQSNLPPE (170 aa). At Gln191 the chain carries Pyrrolidone carboxylic acid. The Peptidase M12B domain occupies 197–394; that stretch reads RYIELVVVAD…HYTTCLYNEP (198 aa). Residues Glu200 and Asp284 each coordinate Ca(2+). Cystine bridges form between Cys308–Cys389, Cys348–Cys372, and Cys350–Cys355. A Zn(2+)-binding site is contributed by His333. Residue Glu334 is part of the active site. Residues His337 and His343 each contribute to the Zn(2+) site. 2 residues coordinate Ca(2+): Cys389 and Asn392. The region spanning 402-486 is the Disintegrin domain; it reads PPVCGNYYTE…AECPNKGYYG (85 aa). Intrachain disulfides connect Cys405–Cys424, Cys416–Cys434, Cys418–Cys429, Cys428–Cys451, Cys442–Cys448, Cys447–Cys472, and Cys460–Cys479. Residues 464-466 carry the Cell attachment site motif; that stretch reads RGD.

Belongs to the venom metalloproteinase (M12B) family. P-II subfamily. P-IIb sub-subfamily. Monomer. The cofactor is Zn(2+). In terms of tissue distribution, expressed by the venom gland.

It localises to the secreted. Functionally, snake venom zinc metalloproteinase that inhibits ADP-induced platelet aggregation (probably by binding integrin alpha-IIb/beta-3 (ITGA2B/ITGB3)) and degrades fibrinogen. In Crotalus atrox (Western diamondback rattlesnake), this protein is Zinc metalloproteinase-disintegrin VMP-II.